The chain runs to 510 residues: MNKIIIRKTEDLKEWRRNLKCDINFIPTMGNLHDGHQKLISTAQSSNCNTNLLSIFVNPLQFDSKEDLKSYPKTVDKDIEIAFSNGADAIFIPNVTDIYPKKNKSISYLKASKELSSALCGLTRVGHFDGVCTVVYRLLKLIQPKNLFLGEKDWQQLLIIKNLIEEKKFNIKIIPVPTQRDSDGVPFSSRNKHLSKSERKSLKLFSNELENAKIIFKKDKRIDLKQLTNKLKSKNISIEYLEHLHPYSLKKVQSNDNISILAGAIKCGKTRLIDHVFLMKRKPIIAIDGPAGSGKSTITKLIAKELNLLYLDTGAMYRAISWLFKKEKIDYAKESELKKILNNISIIFKSNSISQQDVFINNFCVTEEIRSQEISSIVSKISSIKKVREFLVYEQRKIGQSGGLVAEGRDIGTTVFPNAELKIFLTASIDERAKRRKSELDLRGTEEIDFNQLRELIRKRDFEDSTRKISPLKKANDAIELLTDGYSINEVVEKIVNIYNLNIPKEIQLE.

The pantoate--beta-alanine ligase stretch occupies residues 1–276; sequence MNKIIIRKTE…CGKTRLIDHV (276 aa). An ATP-binding site is contributed by 29-36; the sequence is MGNLHDGH. H36 (proton donor) is an active-site residue. Q61 provides a ligand contact to (R)-pantoate. Q61 contacts beta-alanine. 150-153 provides a ligand contact to ATP; the sequence is GEKD. Q156 lines the (R)-pantoate pocket. 187–190 is an ATP binding site; sequence FSSR. A cytidylate kinase region spans residues 277–510; the sequence is FLMKRKPIIA…LNIPKEIQLE (234 aa).

This sequence in the N-terminal section; belongs to the pantothenate synthetase family. In the C-terminal section; belongs to the cytidylate kinase family. Type 1 subfamily.

It localises to the cytoplasm. It catalyses the reaction (R)-pantoate + beta-alanine + ATP = (R)-pantothenate + AMP + diphosphate + H(+). It carries out the reaction CMP + ATP = CDP + ADP. The catalysed reaction is dCMP + ATP = dCDP + ADP. It functions in the pathway cofactor biosynthesis; (R)-pantothenate biosynthesis; (R)-pantothenate from (R)-pantoate and beta-alanine: step 1/1. In terms of biological role, catalyzes the condensation of pantoate with beta-alanine in an ATP-dependent reaction via a pantoyl-adenylate intermediate. Functionally, catalyzes the transfer of a phosphate group from ATP to either CMP or dCMP to form CDP or dCDP and ADP, respectively. In Prochlorococcus marinus subsp. pastoris (strain CCMP1986 / NIES-2087 / MED4), this protein is Bifunctional pantoate ligase/cytidylate kinase.